The chain runs to 180 residues: Cytidylate kinase (180 aa).

ATP is bound at residue 7-15; that stretch reads GPPGSGTTT.

The protein belongs to the cytidylate kinase family. Type 2 subfamily.

The protein resides in the cytoplasm. It catalyses the reaction CMP + ATP = CDP + ADP. It carries out the reaction dCMP + ATP = dCDP + ADP. This is Cytidylate kinase (cmk) from Archaeoglobus fulgidus (strain ATCC 49558 / DSM 4304 / JCM 9628 / NBRC 100126 / VC-16).